The primary structure comprises 238 residues: Uridylate kinase (238 aa).

10–13 (KFSG) provides a ligand contact to ATP. Residues 18-23 (GENGFG) form an involved in allosteric activation by GTP region. A UMP-binding site is contributed by Gly52. Residues Gly53 and Arg57 each contribute to the ATP site. Residues Asp73 and 134–141 (TGNPFFTT) each bind UMP. ATP-binding residues include Thr161, Tyr167, and Asp170.

The protein belongs to the UMP kinase family. As to quaternary structure, homohexamer.

It is found in the cytoplasm. The enzyme catalyses UMP + ATP = UDP + ADP. The protein operates within pyrimidine metabolism; CTP biosynthesis via de novo pathway; UDP from UMP (UMPK route): step 1/1. With respect to regulation, allosterically activated by GTP. Inhibited by UTP. Functionally, catalyzes the reversible phosphorylation of UMP to UDP. This Campylobacter concisus (strain 13826) protein is Uridylate kinase.